A 238-amino-acid chain; its full sequence is MTRVITFVGNVTLLSKVIVKNKLTDVYVDQSYLYKVSDNGVKLPSTNEKAIFFKQDDINIQNLVSEGDGEITKGVGEKVRFHFVDTGIPPFKTSPSLMYSDGSDNEIVEMINRRVRIAKLISLIVNEIDDDLMFIDSDITVNNIDALLYSMSNRTKIGTLCIPAIAKPYNFVIMFCASTNFYLPREMRNDLLNVIQRYIASAKYVNTPVDIFINRELGSTPITWFGVCHHKYDKEWCI.

This is an uncharacterized protein from Acidianus filamentous virus 2 (isolate Italy/Pozzuoli) (AFV-2).